The sequence spans 410 residues: Dihydrolipoyllysine-residue succinyltransferase component of 2-oxoglutarate dehydrogenase complex (410 aa).

Positions 3-81 (IINIFIPDLP…QVIGTLLKIG (79 aa)) constitute a Lipoyl-binding domain. K44 carries the N6-lipoyllysine modification. The Peripheral subunit-binding (PSBD) domain occupies 112–150 (TYSPTVRRLISMHDLRDVDIIQGTGTKNRLTRKDILNYL). Residues H381 and D385 contribute to the active site.

Belongs to the 2-oxoacid dehydrogenase family. Forms a 24-polypeptide structural core with octahedral symmetry. Part of the 2-oxoglutarate dehydrogenase (OGDH) complex composed of E1 (2-oxoglutarate dehydrogenase), E2 (dihydrolipoamide succinyltransferase) and E3 (dihydrolipoamide dehydrogenase); the complex contains multiple copies of the three enzymatic components (E1, E2 and E3). (R)-lipoate serves as cofactor.

The catalysed reaction is N(6)-[(R)-dihydrolipoyl]-L-lysyl-[protein] + succinyl-CoA = N(6)-[(R)-S(8)-succinyldihydrolipoyl]-L-lysyl-[protein] + CoA. It functions in the pathway amino-acid degradation; L-lysine degradation via saccharopine pathway; glutaryl-CoA from L-lysine: step 6/6. Functionally, E2 component of the 2-oxoglutarate dehydrogenase (OGDH) complex which catalyzes the second step in the conversion of 2-oxoglutarate to succinyl-CoA and CO(2). The polypeptide is Dihydrolipoyllysine-residue succinyltransferase component of 2-oxoglutarate dehydrogenase complex (sucB) (Buchnera aphidicola subsp. Baizongia pistaciae (strain Bp)).